Here is a 492-residue protein sequence, read N- to C-terminus: UPF0236 protein TTE1650/TTE2708 (492 aa).

This sequence belongs to the UPF0236 family.

The chain is UPF0236 protein TTE1650/TTE2708 from Caldanaerobacter subterraneus subsp. tengcongensis (strain DSM 15242 / JCM 11007 / NBRC 100824 / MB4) (Thermoanaerobacter tengcongensis).